A 153-amino-acid polypeptide reads, in one-letter code: L-alanine exporter AlaE (153 aa).

Transmembrane regions (helical) follow at residues 16–36, 42–62, 86–106, and 114–134; these read VAMVIYCFITGMAVEMLLSEM, LSSRLLSIPVNIVIAWPYGLY, LFAYVSFQSPVYAAILWAIGA, and AVGSNAIISMLMGVVYGYFLE.

This sequence belongs to the AlaE exporter family.

Its subcellular location is the cell inner membrane. Exports L-alanine. In Musicola paradisiaca (strain Ech703) (Dickeya paradisiaca), this protein is L-alanine exporter AlaE.